The chain runs to 464 residues: Kynureninase (464 aa).

Met1 bears the N-acetylmethionine mark. Pyridoxal 5'-phosphate-binding positions include Leu137, Thr138, 165–168 (FPSD), Ser221, Asp250, His253, and Tyr275. Lys276 carries the N6-(pyridoxal phosphate)lysine modification. 2 residues coordinate pyridoxal 5'-phosphate: Trp305 and Asn333.

Belongs to the kynureninase family. Homodimer. Pyridoxal 5'-phosphate is required as a cofactor.

The protein localises to the cytoplasm. Its subcellular location is the cytosol. It catalyses the reaction L-kynurenine + H2O = anthranilate + L-alanine + H(+). The catalysed reaction is 3-hydroxy-L-kynurenine + H2O = 3-hydroxyanthranilate + L-alanine + H(+). It participates in amino-acid degradation; L-kynurenine degradation; L-alanine and anthranilate from L-kynurenine: step 1/1. Its pathway is cofactor biosynthesis; NAD(+) biosynthesis; quinolinate from L-kynurenine: step 2/3. In terms of biological role, catalyzes the cleavage of L-kynurenine (L-Kyn) and L-3-hydroxykynurenine (L-3OHKyn) into anthranilic acid (AA) and 3-hydroxyanthranilic acid (3-OHAA), respectively. Has a preference for the L-3-hydroxy form. Also has cysteine-conjugate-beta-lyase activity. This Mus musculus (Mouse) protein is Kynureninase (Kynu).